The sequence spans 523 residues: (R)-citramalate synthase (523 aa).

A Pyruvate carboxyltransferase domain is found at 6 to 272 (VEVLDTTLRD…KGNESLKKLK (267 aa)).

This sequence belongs to the alpha-IPM synthase/homocitrate synthase family.

The enzyme catalyses pyruvate + acetyl-CoA + H2O = (3R)-citramalate + CoA + H(+). Its pathway is amino-acid biosynthesis; L-isoleucine biosynthesis; 2-oxobutanoate from pyruvate: step 1/3. Its activity is regulated as follows. Inhibited by isoleucine. Catalyzes the condensation of pyruvate and acetyl-coenzyme A to form (R)-citramalate. Makes part of a pathway for isoleucine biosynthesis, i.e. the citramalate-dependent pathway. Also displays a low alpha-isopropylmalate synthase activity, using 2-oxoisovalerate as substrate, but is unable to use 2-oxoglutarate. The sequence is that of (R)-citramalate synthase from Sulfolobus acidocaldarius (strain ATCC 33909 / DSM 639 / JCM 8929 / NBRC 15157 / NCIMB 11770).